Reading from the N-terminus, the 511-residue chain is Colicin-B (511 aa).

Residues 17-24 (DTMVVWPS) carry the TonB box motif. The next 2 membrane-spanning stretches (helical) occupy residues 455–475 (MASA…LIAF) and 477–497 (LSAT…GAFI).

Belongs to the channel forming colicin family.

The protein localises to the cell membrane. Functionally, this colicin is a channel-forming colicin. This class of transmembrane toxins depolarize the cytoplasmic membrane, leading to dissipation of cellular energy. Colicins are polypeptide toxins produced by and active against E.coli and closely related bacteria. This chain is Colicin-B (cba), found in Escherichia coli.